The primary structure comprises 974 residues: Receptor-like protein 7 (974 aa).

The signal sequence occupies residues 1–24; sequence MSFLIRSICFLILIPSFLITFVSA. Residues 25–930 lie on the Extracellular side of the membrane; the sequence is TQHLCHSDQK…EEEEEESFSW (906 aa). 2 N-linked (GlcNAc...) asparagine glycosylation sites follow: N54 and N90. LRR repeat units follow at residues 96–120, 122–145, 147–166, 181–204, 206–229, and 230–252; these read LRHLRDLNLANNNFNNSPIPAEFDK, TGLERLDLSQSSLSGQIPINLLQL, KLVSLDLSSSDFFGDESFHY, LRNLRELDMSYVKISSEIPEEFSN, RSLRSLNLNGCNLFGEFPSSILLI, and PNLQSIDLGNNPNLRGNLPVFHE. N253 is a glycosylation site (N-linked (GlcNAc...) asparagine). LRR repeat units follow at residues 254 to 277, 278 to 301, 302 to 325, 327 to 349, and 350 to 373; these read NSLLKLTILYTSFSGAIPDSISSL, KNLTSLTLSVSYFSGKIPFSLGNL, SHLSHLSLSSNNLIGEIPSSIGNL, QLTNFYVGGNKLSGNLPATLSNL, and TKLNTISLSSNQFTGSLPPSISQL. 2 N-linked (GlcNAc...) asparagine glycosylation sites follow: N279 and N300. The N-linked (GlcNAc...) asparagine glycan is linked to N348. The stretch at 374-396 is one LRR 12; degenerate repeat; the sequence is SKLKFFFADDNPFIGAILSPLLK. LRR repeat units lie at residues 397-422, 425-448, 454-472, 473-495, 496-519, 521-542, 544-570, 572-589, 590-616, 618-638, 639-662, 664-685, 687-712, 713-737, 785-809, 810-833, 834-857, and 859-882; these read IPSLTRIHLSYNQLNDLVGIENIFML, LETFYIYHYNYTKVRPLDLNVFSS, TLYISRIPISTTNITSDFP, SNLEYLSLRSCNITDFPEFIRKG, RNLQILDLSNNKIKGQVPDWLWRM, TLNSVDLSNNSLSGFHVSVKAS, ESQLTSVDLSSNAFQGPLFLPSKSLRY, SGSNNNFTGKIPRSICGL, SSLEILDLSNNNLNGSLPWCLETLMSS, SDLDLRNNSLSGSLPEIFMNA, TKLRSLDVSHNRMEGKLPGSLTGC, SLEVLNVGSNRINDMFPFELNS, QKLQVLVLHSNKFHGTLHNVDGVWFG, FPQLQIIDVSHNDFFGILPSDYFMN, LTIYTAIDLSGNQLHGKIPDSIGLL, KELRILNMSSNGFTGHIPSSLANL, KNLESLDISQNNISGEIPPELGTL, and SLAWINVSHNQLVGSIPQGTQFQR. N-linked (GlcNAc...) asparagine glycans are attached at residues N434, N466, and N484. An N-linked (GlcNAc...) asparagine glycan is attached at N529. Residues N577, N603, N624, and N637 are each glycosylated (N-linked (GlcNAc...) asparagine). The N-linked (GlcNAc...) asparagine glycan is linked to N737. 3 N-linked (GlcNAc...) asparagine glycosylation sites follow: N816, N845, and N864. The interval 899-923 is disordered; that stretch reads LENVCGHIKESTPTQTEPLETKEEE. The helical transmembrane segment at 931–951 threads the bilayer; it reads IAAGLGFAPGVVFGLAMGYIV. Residues 952-974 are Cytoplasmic-facing; that stretch reads VSYKHQWFMKTFGRSKQQNTRTR.

This sequence belongs to the RLP family.

Its subcellular location is the cell membrane. This chain is Receptor-like protein 7, found in Arabidopsis thaliana (Mouse-ear cress).